The primary structure comprises 348 residues: MTAPSQVLKIRRPDDWHVHLRDGDMLKTVVPYTSEIYGRAIVMPNLASPITTVDAAIAYRQRILDAVPAGHDFTPLMTCYLTDSLDADELERGFHEGVFTAAKLYPANATTNSSHGVTSVDAIMPVLERMEKLGMPLLVHGEVTHADVDIFDREARFIDTVMEPLRQRLTALKVVFEHITTKDAAQYVRDGSDNLAATITPQHLMFNRNDMLVGGIRPHLYCLPILKRNIHQQALRDLVASGFTRAFLGTDSAPHSRHRKETRCGCAGCFNAPSALGSYAAVFEEMNALAHFEAFCSLNGPQFYGLPVNTGWVELVRDEQQIPENIALADDSLVPFLAGETVRWSVKK.

H17 and H19 together coordinate Zn(2+). Substrate-binding positions include 19–21 (HLR) and N45. K103, H140, and H178 together coordinate Zn(2+). N6-carboxylysine is present on K103. Residue H140 participates in substrate binding. L223 contacts substrate. D251 is a binding site for Zn(2+). The active site involves D251. Substrate-binding residues include H255 and A267.

The protein belongs to the metallo-dependent hydrolases superfamily. DHOase family. Class II DHOase subfamily. Homodimer. Zn(2+) is required as a cofactor.

The catalysed reaction is (S)-dihydroorotate + H2O = N-carbamoyl-L-aspartate + H(+). The protein operates within pyrimidine metabolism; UMP biosynthesis via de novo pathway; (S)-dihydroorotate from bicarbonate: step 3/3. Functionally, catalyzes the reversible cyclization of carbamoyl aspartate to dihydroorotate. This is Dihydroorotase from Salmonella paratyphi A (strain ATCC 9150 / SARB42).